Reading from the N-terminus, the 514-residue chain is L-carnitine/gamma-butyrobetaine antiporter (514 aa).

Over 1-11 (MSKDNKKAGIE) the chain is Cytoplasmic. The chain crosses the membrane as a helical span at residues 12 to 30 (PKVFFPPLIIVGILCWLTV). Residues 31-42 (RDLDASNEVINA) are Periplasmic-facing. A helical membrane pass occupies residues 43–68 (VFSYVTNVWGWAFEWYMVIMFGGWFW). At 69–91 (LVFGRYAKKRLGDEKPEFSTASW) the chain is on the cytoplasmic side. Residues 92–112 (IFMMFASCTSAAVLFWGSIEI) form a helical membrane-spanning segment. The Periplasmic portion of the chain corresponds to 113–131 (YYYISSPPFGMEGYSAPAK). A helical membrane pass occupies residues 132–154 (EIGLAYSLFHWGPLPWATYSFLS). Topologically, residues 155–185 (VAFAYFFFVRKMEVIRPSSTLTPLVGEKHVN) are cytoplasmic. Residues 186–216 (GLFGTVVDNFYLVALILAMGTSLGLATPLVT) form a helical membrane-spanning segment. The Periplasmic portion of the chain corresponds to 217–230 (ECIQYLFGIPHTLQ). A helical transmembrane segment spans residues 231–249 (LDAIIISCWILLNAICVAF). Residues 250-251 (GL) are Cytoplasmic-facing. The helical transmembrane segment at 252–277 (QKGVKIASDVRTYLSFLMLGWVFIVG) threads the bilayer. Residues 278–311 (GASFIVNYFTDSVGTLLMYMPRMLFYTDPIGKGG) lie on the Periplasmic side of the membrane. A helical transmembrane segment spans residues 312–335 (FPQAWTVFYWAWWVIYAIQMSIFL). Over 336 to 347 (ARISKGRTVREL) the chain is Cytoplasmic. A helical transmembrane segment spans residues 348-369 (CLGMVSGLTAGTWLIWTILGGN). Residues 370–404 (TLQLIDQNILNIPQLIDQYGVPRAIIETWAALPLS) lie on the Periplasmic side of the membrane. The helical transmembrane segment at 405 to 434 (TATMWGFFILCFIATVTLINACSYTLAMST) threads the bilayer. The Cytoplasmic segment spans residues 435-445 (CRSMKEGAEPP). The helical transmembrane segment at 446–464 (LLVRIGWSVLVGIIGIILL) threads the bilayer. The Periplasmic portion of the chain corresponds to 465 to 468 (ALGG). A helical transmembrane segment spans residues 469–492 (LKPIQTAIIAGGCPLFFVNIMVTL). The Cytoplasmic segment spans residues 493–514 (SFIKDAKVHWKDCSPYTQKMTH).

This sequence belongs to the BCCT transporter (TC 2.A.15) family. CaiT subfamily. In terms of assembly, homotrimer.

It is found in the cell inner membrane. The enzyme catalyses 4-(trimethylamino)butanoate(in) + (R)-carnitine(out) = 4-(trimethylamino)butanoate(out) + (R)-carnitine(in). It participates in amine and polyamine metabolism; carnitine metabolism. Catalyzes the exchange of L-carnitine for gamma-butyrobetaine. The sequence is that of L-carnitine/gamma-butyrobetaine antiporter from Proteus mirabilis (strain HI4320).